Reading from the N-terminus, the 95-residue chain is Protein YY1 (95 aa).

Residues M1–A26 form the signal peptide. Intrachain disulfides connect C31-C72, C41-C61, C62-C87, and C74-C94.

It belongs to the A9/FIL1 family. Anther.

The protein resides in the secreted. This Oryza sativa subsp. japonica (Rice) protein is Protein YY1.